The primary structure comprises 72 residues: Large ribosomal subunit protein bL31 (72 aa).

Zn(2+) contacts are provided by Cys-17, Cys-19, Cys-37, and Cys-40.

Belongs to the bacterial ribosomal protein bL31 family. Type A subfamily. As to quaternary structure, part of the 50S ribosomal subunit. Requires Zn(2+) as cofactor.

Binds the 23S rRNA. This chain is Large ribosomal subunit protein bL31, found in Clostridium botulinum (strain ATCC 19397 / Type A).